The chain runs to 164 residues: ATP synthase subunit b (164 aa).

Residues 5 to 25 form a helical membrane-spanning segment; the sequence is IGELIGNFILVAGSFLLLIVL.

Belongs to the ATPase B chain family. In terms of assembly, F-type ATPases have 2 components, F(1) - the catalytic core - and F(0) - the membrane proton channel. F(1) has five subunits: alpha(3), beta(3), gamma(1), delta(1), epsilon(1). F(0) has three main subunits: a(1), b(2) and c(10-14). The alpha and beta chains form an alternating ring which encloses part of the gamma chain. F(1) is attached to F(0) by a central stalk formed by the gamma and epsilon chains, while a peripheral stalk is formed by the delta and b chains.

It is found in the cell membrane. F(1)F(0) ATP synthase produces ATP from ADP in the presence of a proton or sodium gradient. F-type ATPases consist of two structural domains, F(1) containing the extramembraneous catalytic core and F(0) containing the membrane proton channel, linked together by a central stalk and a peripheral stalk. During catalysis, ATP synthesis in the catalytic domain of F(1) is coupled via a rotary mechanism of the central stalk subunits to proton translocation. Its function is as follows. Component of the F(0) channel, it forms part of the peripheral stalk, linking F(1) to F(0). The protein is ATP synthase subunit b of Streptococcus gordonii (strain Challis / ATCC 35105 / BCRC 15272 / CH1 / DL1 / V288).